The chain runs to 242 residues: Biosynthetic peptidoglycan transglycosylase (242 aa).

The helical transmembrane segment at 18–38 threads the bilayer; the sequence is VIMAVLCIAILYQLWMFSLVV.

This sequence belongs to the glycosyltransferase 51 family.

Its subcellular location is the cell inner membrane. It catalyses the reaction [GlcNAc-(1-&gt;4)-Mur2Ac(oyl-L-Ala-gamma-D-Glu-L-Lys-D-Ala-D-Ala)](n)-di-trans,octa-cis-undecaprenyl diphosphate + beta-D-GlcNAc-(1-&gt;4)-Mur2Ac(oyl-L-Ala-gamma-D-Glu-L-Lys-D-Ala-D-Ala)-di-trans,octa-cis-undecaprenyl diphosphate = [GlcNAc-(1-&gt;4)-Mur2Ac(oyl-L-Ala-gamma-D-Glu-L-Lys-D-Ala-D-Ala)](n+1)-di-trans,octa-cis-undecaprenyl diphosphate + di-trans,octa-cis-undecaprenyl diphosphate + H(+). It functions in the pathway cell wall biogenesis; peptidoglycan biosynthesis. In terms of biological role, peptidoglycan polymerase that catalyzes glycan chain elongation from lipid-linked precursors. In Bordetella bronchiseptica (strain ATCC BAA-588 / NCTC 13252 / RB50) (Alcaligenes bronchisepticus), this protein is Biosynthetic peptidoglycan transglycosylase.